The primary structure comprises 469 residues: Keratin, type I cytoskeletal 16 (469 aa).

Positions 1 to 20 (MATCSRQFTSSSSMKGSCGI) are disordered. The interval 1–112 (MATCSRQFTS…GIGDGLLVGS (112 aa)) is head. Residues 113-148 (EKVTMQNLNDRLATYLDKVRALEEANRDLEVKIRDW) form a coil 1A region. The region spanning 113–424 (EKVTMQNLND…RLLDGENIHS (312 aa)) is the IF rod domain. The tract at residues 149-166 (YQRQRPTEIKDYSPYFKT) is linker 1. Positions 167 to 258 (IEDLKSKIII…KNHEEEMLAL (92 aa)) are coil 1B. The linker 12 stretch occupies residues 259 to 281 (RGQTGGDVNVEMDAAPGVDLSRI). Residues 282–420 (LNEMRDQYEQ…ATYRRLLDGE (139 aa)) form a coil 2 region. Residues 421-469 (NIHSSSQHSSGQSYSSREVFSSSSRQPRSILKEQGSTSFSQSQSQSSRD) form a tail region. The interval 422-469 (IHSSSQHSSGQSYSSREVFSSSSRQPRSILKEQGSTSFSQSQSQSSRD) is disordered. Low complexity-rich tracts occupy residues 423 to 444 (HSSSQHSSGQSYSSREVFSSSS) and 454 to 469 (QGSTSFSQSQSQSSRD).

It belongs to the intermediate filament family. Heterodimer of a type I and a type II keratin. KRT16 associates with KRT6 isomers (KRT6A or KRT6B). Interacts with TCHP. Interacts with TRADD. As to expression, expressed in the epithelia of the tongue, upper and lower palate, footpad, proximal nail fold and nail bed, penile spine, sweat gland ducts, and back epidermis (at protein level). Expressed in upper suprabasal layers of the corneal epithelium (at protein level). Expressed in internal stratified epithelia in the esophagus and vagina (at protein level). Expressed in transitional stratified squamous epithelia in the forestomach, anal canal, and nasal cavity (at protein level). Expressed in transitional epithelia of the ureter, bladder and urethra (at protein level). In mature hair follicles, expressed in the companion layer of the outer root sheath during anagen and in the club hair sheath during catagen and telogen (at protein level).

Functionally, epidermis-specific type I keratin that plays a key role in skin. Acts as a regulator of innate immunity in response to skin barrier breach: required for some inflammatory checkpoint for the skin barrier maintenance. The polypeptide is Keratin, type I cytoskeletal 16 (Krt16) (Mus musculus (Mouse)).